The chain runs to 346 residues: D-alanine--D-alanine ligase (346 aa).

One can recognise an ATP-grasp domain in the interval 133–327; that stretch reads KLYAKSVGVK…ALADQISLEK (195 aa). ATP is bound at residue 159-211; sequence LSFPCIIKPARLGSSIGISIVKDEKDLEYAKDVGFEFDNDLVVEEFKNNIKEY. Mg(2+)-binding residues include Asp284, Glu296, and Asn298.

Belongs to the D-alanine--D-alanine ligase family. The cofactor is Mg(2+). It depends on Mn(2+) as a cofactor.

The protein localises to the cytoplasm. The catalysed reaction is 2 D-alanine + ATP = D-alanyl-D-alanine + ADP + phosphate + H(+). It participates in cell wall biogenesis; peptidoglycan biosynthesis. Functionally, cell wall formation. The sequence is that of D-alanine--D-alanine ligase from Campylobacter jejuni subsp. jejuni serotype O:23/36 (strain 81-176).